Reading from the N-terminus, the 632-residue chain is 1-deoxy-D-xylulose-5-phosphate synthase (632 aa).

Residues His77 and 118-120 contribute to the thiamine diphosphate site; that span reads GHA. Asp149 provides a ligand contact to Mg(2+). Thiamine diphosphate contacts are provided by residues 150 to 151, Asn178, Phe287, and Glu372; that span reads GS. Asn178 serves as a coordination point for Mg(2+).

It belongs to the transketolase family. DXPS subfamily. In terms of assembly, homodimer. The cofactor is Mg(2+). Thiamine diphosphate serves as cofactor.

The enzyme catalyses D-glyceraldehyde 3-phosphate + pyruvate + H(+) = 1-deoxy-D-xylulose 5-phosphate + CO2. The protein operates within metabolic intermediate biosynthesis; 1-deoxy-D-xylulose 5-phosphate biosynthesis; 1-deoxy-D-xylulose 5-phosphate from D-glyceraldehyde 3-phosphate and pyruvate: step 1/1. Catalyzes the acyloin condensation reaction between C atoms 2 and 3 of pyruvate and glyceraldehyde 3-phosphate to yield 1-deoxy-D-xylulose-5-phosphate (DXP). This chain is 1-deoxy-D-xylulose-5-phosphate synthase, found in Chlorobium luteolum (strain DSM 273 / BCRC 81028 / 2530) (Pelodictyon luteolum).